Consider the following 117-residue polypeptide: Probable glycerol dehydratase-reactivating factor small subunit (117 aa).

Glu-31 contributes to the Mg(2+) binding site.

It belongs to the DdrB/PduH family. Member of the GDR complex, probably composed of DhaF(2)/DhaG(2). Requires Mg(2+) as cofactor.

In terms of biological role, small subunit of the glycerol dehydratase-reactivating factor (GDR), which reactivates suicidally inhibited adenosylcobalamin-dependent glycerol dehydratase. This Citrobacter freundii protein is Probable glycerol dehydratase-reactivating factor small subunit.